A 424-amino-acid polypeptide reads, in one-letter code: Glutamyl-tRNA reductase (424 aa).

Substrate is bound by residues 49–52 (TCNR), S109, 114–116 (EDQ), and Q120. C50 serves as the catalytic Nucleophile. 189-194 (GFGKMS) contacts NADP(+).

Belongs to the glutamyl-tRNA reductase family. In terms of assembly, homodimer.

It carries out the reaction (S)-4-amino-5-oxopentanoate + tRNA(Glu) + NADP(+) = L-glutamyl-tRNA(Glu) + NADPH + H(+). Its pathway is porphyrin-containing compound metabolism; protoporphyrin-IX biosynthesis; 5-aminolevulinate from L-glutamyl-tRNA(Glu): step 1/2. Functionally, catalyzes the NADPH-dependent reduction of glutamyl-tRNA(Glu) to glutamate 1-semialdehyde (GSA). This is Glutamyl-tRNA reductase from Alkaliphilus metalliredigens (strain QYMF).